The sequence spans 265 residues: Neuronal membrane glycoprotein M6-b (265 aa).

Residues 31-51 form a helical membrane-spanning segment; it reads GGVPYASLVATILCFSGVALF. Residue Asn-73 is glycosylated (N-linked (GlcNAc...) asparagine). 2 helical membrane-spanning segments follow: residues 90–110 and 136–156; these read VIYG…AEGF and FVFL…FSAV. Residue Asn-177 is glycosylated (N-linked (GlcNAc...) asparagine). A helical transmembrane segment spans residues 224–244; that stretch reads LFIVACAGAGATVIALLIYMM. Ser-257 carries the phosphoserine modification.

Belongs to the myelin proteolipid protein family. Interacts with SERT. Neurons and glia; cerebellar Bergmann glia, in glia within white matter tracts of the cerebellum and cerebrum, and in embryonic dorsal root ganglia.

It localises to the cell membrane. Its function is as follows. May be involved in neural development. Involved in regulation of osteoblast function and bone formation. Involved in matrix vesicle release by osteoblasts; this function seems to involve maintenance of the actin cytoskeleton. May be involved in cellular trafficking of SERT and thereby in regulation of serotonin uptake. In Homo sapiens (Human), this protein is Neuronal membrane glycoprotein M6-b (GPM6B).